A 609-amino-acid polypeptide reads, in one-letter code: Elongation factor 4 (609 aa).

The 183-residue stretch at 5–187 (SKIRNFSIIA…AIVAKIPPPE (183 aa)) folds into the tr-type G domain. Residues 17 to 22 (DHGKST) and 134 to 137 (NKID) each bind GTP.

This sequence belongs to the TRAFAC class translation factor GTPase superfamily. Classic translation factor GTPase family. LepA subfamily.

It localises to the cell inner membrane. The enzyme catalyses GTP + H2O = GDP + phosphate + H(+). Functionally, required for accurate and efficient protein synthesis under certain stress conditions. May act as a fidelity factor of the translation reaction, by catalyzing a one-codon backward translocation of tRNAs on improperly translocated ribosomes. Back-translocation proceeds from a post-translocation (POST) complex to a pre-translocation (PRE) complex, thus giving elongation factor G a second chance to translocate the tRNAs correctly. Binds to ribosomes in a GTP-dependent manner. This Erythrobacter litoralis (strain HTCC2594) protein is Elongation factor 4.